The primary structure comprises 128 residues: Fluoride-specific ion channel FluC (128 aa).

The next 4 helical transmembrane spans lie at Ile5–Ala25, Leu35–Phe55, Leu67–Val87, and Phe96–Leu116. 2 residues coordinate Na(+): Gly75 and Thr78.

Belongs to the fluoride channel Fluc/FEX (TC 1.A.43) family.

The protein localises to the cell inner membrane. It carries out the reaction fluoride(in) = fluoride(out). With respect to regulation, na(+) is not transported, but it plays an essential structural role and its presence is essential for fluoride channel function. Its function is as follows. Fluoride-specific ion channel. Important for reducing fluoride concentration in the cell, thus reducing its toxicity. This chain is Fluoride-specific ion channel FluC, found in Burkholderia orbicola (strain MC0-3).